The following is a 605-amino-acid chain: Mini-chromosome maintenance complex-binding protein (605 aa).

2 positions are modified to phosphoserine: S147 and S150.

This sequence belongs to the MCMBP family. In terms of assembly, interacts with the MCM complex.

Its subcellular location is the nucleus. In terms of biological role, associated component of the MCM complex that acts as a regulator of DNA replication. Binds to the MCM complex during late S phase and may act by promoting the disassembly of the MCM complex from chromatin. The protein is Mini-chromosome maintenance complex-binding protein of Drosophila melanogaster (Fruit fly).